A 524-amino-acid polypeptide reads, in one-letter code: GMP synthase [glutamine-hydrolyzing] (524 aa).

One can recognise a Glutamine amidotransferase type-1 domain in the interval Arg9–Asn207. The active-site Nucleophile is Cys86. Residues His181 and Glu183 contribute to the active site. Residues Trp208 to Arg399 enclose the GMPS ATP-PPase domain. Residue Ser235 to Ala241 participates in ATP binding.

As to quaternary structure, homodimer.

The catalysed reaction is XMP + L-glutamine + ATP + H2O = GMP + L-glutamate + AMP + diphosphate + 2 H(+). The protein operates within purine metabolism; GMP biosynthesis; GMP from XMP (L-Gln route): step 1/1. In terms of biological role, catalyzes the synthesis of GMP from XMP. This is GMP synthase [glutamine-hydrolyzing] from Coxiella burnetii (strain RSA 331 / Henzerling II).